A 239-amino-acid chain; its full sequence is Probable phosphatase Csac_1188 (239 aa).

9 residues coordinate Zn(2+): histidine 8, histidine 10, histidine 16, histidine 41, glutamate 74, histidine 102, histidine 132, aspartate 192, and histidine 194.

It belongs to the PHP family. Requires Zn(2+) as cofactor.

The sequence is that of Probable phosphatase Csac_1188 from Caldicellulosiruptor saccharolyticus (strain ATCC 43494 / DSM 8903 / Tp8T 6331).